We begin with the raw amino-acid sequence, 137 residues long: Holo-[acyl-carrier-protein] synthase (137 aa).

Residues aspartate 8 and glutamate 57 each coordinate Mg(2+).

Belongs to the P-Pant transferase superfamily. AcpS family. Requires Mg(2+) as cofactor.

It localises to the cytoplasm. The enzyme catalyses apo-[ACP] + CoA = holo-[ACP] + adenosine 3',5'-bisphosphate + H(+). In terms of biological role, transfers the 4'-phosphopantetheine moiety from coenzyme A to a Ser of acyl-carrier-protein. The sequence is that of Holo-[acyl-carrier-protein] synthase from Cereibacter sphaeroides (strain ATCC 17025 / ATH 2.4.3) (Rhodobacter sphaeroides).